Consider the following 473-residue polypeptide: Putative protein TIC 214 C-terminal part (473 aa).

Belongs to the TIC214 family. In terms of assembly, part of the Tic complex.

The protein localises to the plastid. It is found in the chloroplast. Involved in protein precursor import into chloroplasts. May be part of an intermediate translocation complex acting as a protein-conducting channel at the inner envelope. The chain is Putative protein TIC 214 C-terminal part from Anthoceros angustus (Hornwort).